A 912-amino-acid polypeptide reads, in one-letter code: Eukaryotic translation initiation factor 3 subunit C (912 aa).

Residues 1 to 44 (MSRFFTTGSDSESESSLSGEELVTKPVGGNYGKQPLLLSEDEED) form a disordered region. The segment covering 8–21 (GSDSESESSLSGEE) has biased composition (low complexity). Ser9, Ser11, Ser13, Ser15, Ser16, Ser18, and Ser39 each carry phosphoserine. Lys99 is subject to N6-acetyllysine. Disordered stretches follow at residues 157–305 (TNYK…RVRG) and 521–541 (QLTPPEGSSKSEQDQAENEGE). Phosphoserine is present on residues Ser166, Ser178, Ser181, and Ser182. Acidic residues predominate over residues 166–190 (SADEDAEKNEEDSEGSSDEDEDDDG). A compositionally biased stretch (basic and acidic residues) spans 199–215 (KKSEAPSGDSRKFLKKE). Residues 216–229 (DEDEDSEESEDSEA) show a composition bias toward acidic residues. A compositionally biased stretch (basic and acidic residues) spans 260 to 277 (PTTEEDKKAAEKKREDKA). Positions 521 to 530 (QLTPPEGSSK) are enriched in polar residues. Thr523 carries the phosphothreonine modification. Position 642 is an N6-acetyllysine (Lys642). In terms of domain architecture, PCI spans 672 to 848 (FHLHINLELL…QTVVMHRTEP (177 aa)). The segment at 884-912 (FRDQKDGYRKNEGYMRRGGYRQQQSQTAY) is disordered. Residues 885–898 (RDQKDGYRKNEGYM) are compositionally biased toward basic and acidic residues. Ser908 bears the Phosphoserine mark.

This sequence belongs to the eIF-3 subunit C family. As to quaternary structure, component of the eukaryotic translation initiation factor 3 (eIF-3) complex, which is composed of 13 subunits: EIF3A, EIF3B, EIF3C, EIF3D, EIF3E, EIF3F, EIF3G, EIF3H, EIF3I, EIF3J, EIF3K, EIF3L and EIF3M. The eIF-3 complex appears to include 3 stable modules: module A is composed of EIF3A, EIF3B, EIF3G and EIF3I; module B is composed of EIF3F, EIF3H, and EIF3M; and module C is composed of EIF3C, EIF3D, EIF3E, EIF3K and EIF3L. EIF3C of module C binds EIF3B of module A and EIF3H of module B, thereby linking the three modules. EIF3J is a labile subunit that binds to the eIF-3 complex via EIF3B. The eIF-3 complex interacts with RPS6KB1 under conditions of nutrient depletion. Mitogenic stimulation leads to binding and activation of a complex composed of MTOR and RPTOR, leading to phosphorylation and release of RPS6KB1 and binding of EIF4B to eIF-3. Identified in a HCV IRES-mediated translation complex, at least composed of EIF3C, IGF2BP1, RPS3 and HCV RNA-replicon. Interacts with ALKBH4, IFIT1 and IFIT2. Interacts with BZW2/5MP1. Post-translationally, phosphorylated. Phosphorylation is enhanced upon serum stimulation.

It is found in the cytoplasm. Its function is as follows. Component of the eukaryotic translation initiation factor 3 (eIF-3) complex, which is required for several steps in the initiation of protein synthesis. The eIF-3 complex associates with the 40S ribosome and facilitates the recruitment of eIF-1, eIF-1A, eIF-2:GTP:methionyl-tRNAi and eIF-5 to form the 43S pre-initiation complex (43S PIC). The eIF-3 complex stimulates mRNA recruitment to the 43S PIC and scanning of the mRNA for AUG recognition. The eIF-3 complex is also required for disassembly and recycling of post-termination ribosomal complexes and subsequently prevents premature joining of the 40S and 60S ribosomal subunits prior to initiation. The eIF-3 complex specifically targets and initiates translation of a subset of mRNAs involved in cell proliferation, including cell cycling, differentiation and apoptosis, and uses different modes of RNA stem-loop binding to exert either translational activation or repression. This chain is Eukaryotic translation initiation factor 3 subunit C, found in Bos taurus (Bovine).